We begin with the raw amino-acid sequence, 404 residues long: Putative replication protein C (404 aa).

The disordered stretch occupies residues 249–287; the sequence is PDQIERHKQNSHPESTNEFEPSSREEQGERPSPAIEPQR.

The protein to A.rhizogenes possible replication protein C (RepC).

The protein is Putative replication protein C of Sinorhizobium fredii (strain NBRC 101917 / NGR234).